The chain runs to 209 residues: Ribosomal RNA large subunit methyltransferase E (209 aa).

The S-adenosyl-L-methionine site is built by G63, W65, D83, D99, and D124. The Proton acceptor role is filled by K164.

The protein belongs to the class I-like SAM-binding methyltransferase superfamily. RNA methyltransferase RlmE family.

Its subcellular location is the cytoplasm. The catalysed reaction is uridine(2552) in 23S rRNA + S-adenosyl-L-methionine = 2'-O-methyluridine(2552) in 23S rRNA + S-adenosyl-L-homocysteine + H(+). In terms of biological role, specifically methylates the uridine in position 2552 of 23S rRNA at the 2'-O position of the ribose in the fully assembled 50S ribosomal subunit. This is Ribosomal RNA large subunit methyltransferase E from Vibrio vulnificus (strain CMCP6).